We begin with the raw amino-acid sequence, 880 residues long: Alanine--tRNA ligase (880 aa).

4 residues coordinate Zn(2+): histidine 566, histidine 570, cysteine 668, and histidine 672.

It belongs to the class-II aminoacyl-tRNA synthetase family. The cofactor is Zn(2+).

The protein resides in the cytoplasm. It carries out the reaction tRNA(Ala) + L-alanine + ATP = L-alanyl-tRNA(Ala) + AMP + diphosphate. Catalyzes the attachment of alanine to tRNA(Ala) in a two-step reaction: alanine is first activated by ATP to form Ala-AMP and then transferred to the acceptor end of tRNA(Ala). Also edits incorrectly charged Ser-tRNA(Ala) and Gly-tRNA(Ala) via its editing domain. The polypeptide is Alanine--tRNA ligase (Trichormus variabilis (strain ATCC 29413 / PCC 7937) (Anabaena variabilis)).